A 383-amino-acid polypeptide reads, in one-letter code: Ribosomal RNA large subunit methyltransferase G (383 aa).

This sequence belongs to the methyltransferase superfamily. RlmG family.

Its subcellular location is the cytoplasm. The enzyme catalyses guanosine(1835) in 23S rRNA + S-adenosyl-L-methionine = N(2)-methylguanosine(1835) in 23S rRNA + S-adenosyl-L-homocysteine + H(+). In terms of biological role, specifically methylates the guanine in position 1835 (m2G1835) of 23S rRNA. This Shewanella denitrificans (strain OS217 / ATCC BAA-1090 / DSM 15013) protein is Ribosomal RNA large subunit methyltransferase G.